The chain runs to 199 residues: Inner membrane-spanning protein YciB (199 aa).

The next 5 helical transmembrane spans lie at 3-23 (LLID…WGIY), 47-67 (VEPM…ATLL), 76-96 (WKPS…QLVF), 119-139 (LNWS…VIAY), and 149-169 (FKLF…AIYM). Residues 180-199 (AAAATPDALPPPGVQQDKQP) form a disordered region.

This sequence belongs to the YciB family.

It localises to the cell inner membrane. Functionally, plays a role in cell envelope biogenesis, maintenance of cell envelope integrity and membrane homeostasis. The sequence is that of Inner membrane-spanning protein YciB from Delftia acidovorans (strain DSM 14801 / SPH-1).